A 391-amino-acid chain; its full sequence is Methylthioribose-1-phosphate isomerase (391 aa).

The active-site Proton donor is Asp-267.

This sequence belongs to the eIF-2B alpha/beta/delta subunits family. MtnA subfamily.

Its subcellular location is the cytoplasm. It is found in the nucleus. It catalyses the reaction 5-(methylsulfanyl)-alpha-D-ribose 1-phosphate = 5-(methylsulfanyl)-D-ribulose 1-phosphate. It participates in amino-acid biosynthesis; L-methionine biosynthesis via salvage pathway; L-methionine from S-methyl-5-thio-alpha-D-ribose 1-phosphate: step 1/6. In terms of biological role, catalyzes the interconversion of methylthioribose-1-phosphate (MTR-1-P) into methylthioribulose-1-phosphate (MTRu-1-P). This Ajellomyces capsulatus (strain NAm1 / WU24) (Darling's disease fungus) protein is Methylthioribose-1-phosphate isomerase.